The primary structure comprises 258 residues: MGKYNFTALRVRQTALRQHAAGKIRAPPKWLDVVADIPPAQVLVRNQAPQHQLVRQRVKTLPGTSKPQVVFEVQEKRIKPKKASRMFLPTEIKYEEDQLRQEFFRDHPWELARPRVLVESTGKDSEHYDWSRLQQPGKRLDGESVVQRQLWLLNNVPDMTKSAAYDIARREFYRLRLQEDIERRVAAEEAEATGATFGPSLLEVGMELENQEYERWKAWAKMEAQLLDQKTAAFTGAPEIAAADDAVEELEEKVPVPV.

It belongs to the mitochondrion-specific ribosomal protein mS23 family. Component of the mitochondrial small ribosomal subunit.

It localises to the mitochondrion. This is Small ribosomal subunit protein mS23 from Aspergillus fumigatus (strain CBS 144.89 / FGSC A1163 / CEA10) (Neosartorya fumigata).